We begin with the raw amino-acid sequence, 212 residues long: MADTIVDAVSRALDEAPGRNFRETVDLAVNLRDLDLNDPSKRVDESIVLPSGTGQDTQIVVFATGETALRAEDAADEVLGPDELEDFGDDTDAAKDLADETDFFVAEAGLMQDIGRYLGTVLGPRGKMPTPLQPDDDVVETVNRMKNTVQLRSRDRRTFHTRVGADDMTPDEIAENIDVIVRRLEATLEKGPLNIDSVYVKTTMGPSVEVPA.

The protein belongs to the universal ribosomal protein uL1 family. As to quaternary structure, part of the 50S ribosomal subunit.

In terms of biological role, binds directly to 23S rRNA. Probably involved in E site tRNA release. Its function is as follows. Protein L1 is also a translational repressor protein, it controls the translation of its operon by binding to its mRNA. This is Large ribosomal subunit protein uL1 from Haloferax volcanii (strain ATCC 29605 / DSM 3757 / JCM 8879 / NBRC 14742 / NCIMB 2012 / VKM B-1768 / DS2) (Halobacterium volcanii).